Consider the following 296-residue polypeptide: Urease accessory protein UreD (296 aa).

It belongs to the UreD family. UreD, UreF and UreG form a complex that acts as a GTP-hydrolysis-dependent molecular chaperone, activating the urease apoprotein by helping to assemble the nickel containing metallocenter of UreC. The UreE protein probably delivers the nickel.

It localises to the cytoplasm. Its function is as follows. Required for maturation of urease via the functional incorporation of the urease nickel metallocenter. The polypeptide is Urease accessory protein UreD (Janthinobacterium sp. (strain Marseille) (Minibacterium massiliensis)).